Here is a 315-residue protein sequence, read N- to C-terminus: Olfactory receptor 8J2 (315 aa).

The Extracellular segment spans residues 1-24; the sequence is MASGNLTWVTEFILVGVSDDPELQ. Asn-5 carries N-linked (GlcNAc...) asparagine glycosylation. A helical transmembrane segment spans residues 25–45; the sequence is IPLFLVFLVLYLLTVAGNLGI. The Cytoplasmic segment spans residues 46–57; it reads ITLTSVDPQLQT. Residues 58-78 form a helical membrane-spanning segment; sequence PMYFFLRHLAIINLCNSTVVA. Topologically, residues 79 to 97 are extracellular; that stretch reads PKMLVNFLVTKKTISYYGC. An intrachain disulfide couples Cys-97 to Cys-179. A helical membrane pass occupies residues 98 to 118; the sequence is AAQLGGFLVFIVAEIFTLAAM. Over 119–143 the chain is Cytoplasmic; the sequence is AYDRYVAIWSPLLYAVVVSPKVCRL. The chain crosses the membrane as a helical span at residues 144-164; sequence LVSLTYLQSLITALTVSSCVF. Topologically, residues 165–205 are extracellular; the sequence is SVSYCSSNIINHFYCDDVPLLALSCSDTYIPETAVFIFSGT. The chain crosses the membrane as a helical span at residues 206–226; that stretch reads NLLFSMIVVLISYFNIVITIL. Topologically, residues 227-239 are cytoplasmic; it reads RIRSSEGRQKAFS. The chain crosses the membrane as a helical span at residues 240–260; sequence TCASHMIAVVVFYGTLLFMYL. Residues 261 to 271 lie on the Extracellular side of the membrane; that stretch reads QPRSNHSLDTD. The N-linked (GlcNAc...) asparagine glycan is linked to Asn-265. A helical membrane pass occupies residues 272–292; it reads KMASVFYTLVIPVLNPLIYSL. The Cytoplasmic portion of the chain corresponds to 293–315; that stretch reads RNKNVKDALKRFLDNPCRSLKLM.

The protein belongs to the G-protein coupled receptor 1 family.

It is found in the membrane. In terms of biological role, odorant receptor. The sequence is that of Olfactory receptor 8J2 (OR8J2) from Homo sapiens (Human).